We begin with the raw amino-acid sequence, 156 residues long: Transcription elongation factor GreA (156 aa).

Residues 1-84 (MAKYTISKHR…IEDVMRSTDE (84 aa)) are a coiled coil.

This sequence belongs to the GreA/GreB family.

Necessary for efficient RNA polymerase transcription elongation past template-encoded arresting sites. The arresting sites in DNA have the property of trapping a certain fraction of elongating RNA polymerases that pass through, resulting in locked ternary complexes. Cleavage of the nascent transcript by cleavage factors such as GreA or GreB allows the resumption of elongation from the new 3'terminus. GreA releases sequences of 2 to 3 nucleotides. The polypeptide is Transcription elongation factor GreA (Ureaplasma urealyticum serovar 10 (strain ATCC 33699 / Western)).